The sequence spans 167 residues: Ribosome maturation factor RimM (167 aa).

One can recognise a PRC barrel domain in the interval 92–166; the sequence is DDEFYHTDLI…RIVADPPEGL (75 aa).

The protein belongs to the RimM family. Binds ribosomal protein uS19.

It is found in the cytoplasm. In terms of biological role, an accessory protein needed during the final step in the assembly of 30S ribosomal subunit, possibly for assembly of the head region. Essential for efficient processing of 16S rRNA. May be needed both before and after RbfA during the maturation of 16S rRNA. It has affinity for free ribosomal 30S subunits but not for 70S ribosomes. The protein is Ribosome maturation factor RimM of Ruegeria pomeroyi (strain ATCC 700808 / DSM 15171 / DSS-3) (Silicibacter pomeroyi).